Consider the following 387-residue polypeptide: Protein WHAT'S THIS FACTOR 9, mitochondrial (387 aa).

A mitochondrion-targeting transit peptide spans 1 to 24 (MLSIRRHAKTVASSCTNLTQKRTY). Residues 32–358 (KRDPYFDNIE…KKYIQLMKNS (327 aa)) enclose the PORR domain.

The protein localises to the mitochondrion. Functionally, RNA-binding protein involved in group II intron splicing. Binds specific group II introns and promotes their splicing (e.g. rpl2 and ccmFC). This chain is Protein WHAT'S THIS FACTOR 9, mitochondrial, found in Arabidopsis thaliana (Mouse-ear cress).